The sequence spans 1163 residues: Type IV pilus biogenesis factor PilY1 (1163 aa).

Residues methionine 1–alanine 30 form the signal peptide. The tract at residues serine 329–tyrosine 352 is disordered. Residues aspartate 600, aspartate 602, asparagine 604, and aspartate 608 each contribute to the Ca(2+) site. The segment at arginine 619 to aspartate 621 is integrin-binding motif RGD. Residues aspartate 851, asparagine 853, aspartate 855, valine 857, and aspartate 859 each contribute to the Ca(2+) site. The segment at serine 1138–asparagine 1163 is disordered.

This sequence belongs to the PilY1 family. In terms of assembly, interacts (via C-terminal 532-1163) with host integrins alpha-V/beta-3 (ITGAV/ITGB3) and alpha-V/beta-5 (ITGAV/ITGB5).

Its subcellular location is the fimbrium. It localises to the membrane. It is found in the cytoplasm. The protein localises to the cytosol. Its function is as follows. Involved in pilus assembly, twitching motility and adhesion to host cells. Primes type IV pili (T4P) assembly and is required for inclusion of minor pilins PilV, PilW and PilX to the surface pili. Stabilizes assembled pilus fibers likely by antagonizing retraction mediated by PilT. Calcium-binding and calcium release by PilY1 seem to be essential for twitching motility and for regulation of pilus retraction dynamics of PilT. Adhesin for human tissue specifically recognizing a host receptor localized or enriched on basolateral epithelial cell surfaces. Binds host integrins in an calcium-dependent manner in vitro and this interaction may be employed by the bacterium to mediate host epithelial cell binding in vivo. The polypeptide is Type IV pilus biogenesis factor PilY1 (Pseudomonas aeruginosa (strain PAK)).